Reading from the N-terminus, the 686-residue chain is Translation initiation factor IF-2 (686 aa).

Residues 54-105 (KPSVADEFEVEEKVVRSKKNSNKKKKKGKGNEDKRQENFAGRQQTQTVETPD) are disordered. The segment covering 69–81 (RSKKNSNKKKKKG) has biased composition (basic residues). The region spanning 188-357 (ERPAVVTIMG…LLISEVEEYK (170 aa)) is the tr-type G domain. The G1 stretch occupies residues 197-204 (GHVDHGKT). Residue 197–204 (GHVDHGKT) coordinates GTP. A G2 region spans residues 222-226 (GITQH). The G3 stretch occupies residues 243 to 246 (DTPG). Residues 243 to 247 (DTPGH) and 297 to 300 (NKMD) each bind GTP. The tract at residues 297-300 (NKMD) is G4. Residues 333-335 (SAI) are G5.

Belongs to the TRAFAC class translation factor GTPase superfamily. Classic translation factor GTPase family. IF-2 subfamily.

It localises to the cytoplasm. In terms of biological role, one of the essential components for the initiation of protein synthesis. Protects formylmethionyl-tRNA from spontaneous hydrolysis and promotes its binding to the 30S ribosomal subunits. Also involved in the hydrolysis of GTP during the formation of the 70S ribosomal complex. This Bacillus anthracis (strain A0248) protein is Translation initiation factor IF-2.